The following is a 505-amino-acid chain: Monocarboxylate transporter 6 (505 aa).

Residues 1-17 (MPQALERADGSWAWVVL) are Cytoplasmic-facing. A helical transmembrane segment spans residues 18 to 38 (LATMVTQGLTLGFPTCIGIFF). Residues 39-53 (TELQWEFQASNSETS) are Extracellular-facing. Residues 54-74 (WFPSILTAVLHMAGPLCSILV) form a helical membrane-spanning segment. Topologically, residues 75-80 (GRFGCR) are cytoplasmic. The helical transmembrane segment at 81-101 (VTVMLGGVLASLGMVASSFSH) threads the bilayer. Residues 102-110 (NLSQLYFTA) lie on the Extracellular side of the membrane. Residues 111 to 131 (GFITGLGMCFSFQSSITVLGF) form a helical membrane-spanning segment. Over 132–137 (YFVRRR) the chain is Cytoplasmic. A helical membrane pass occupies residues 138–158 (VLANALASMGVSLGITLWPLL). Topologically, residues 159 to 171 (SRYLLENLGWRGT) are extracellular. A helical membrane pass occupies residues 172–192 (FLVFGGIFLHCCICGAIIRPV). The Cytoplasmic portion of the chain corresponds to 193–239 (ATSVAPETKECPPPPPETPALGCLAACGRTIQRHLAFDILRHNTGYC). The helical transmembrane segment at 240 to 260 (VYILGVMWSVLGFPLPQVFLV) threads the bilayer. Residues 261 to 274 (PYAMWHSVDEQQAA) lie on the Extracellular side of the membrane. The helical transmembrane segment at 275-295 (LLISIIGFSNIFLRPLAGLMA) threads the bilayer. Over 296-305 (GRPAFASHRK) the chain is Cytoplasmic. The chain crosses the membrane as a helical span at residues 306 to 326 (YLFSLALLLNGLTNLVCAASG). The Extracellular portion of the chain corresponds to 327 to 329 (DFW). A helical membrane pass occupies residues 330 to 350 (VLVGYCLAYSVSMSGIGALIF). The Cytoplasmic segment spans residues 351 to 367 (QVLMDIVPMDQFPRALG). A helical membrane pass occupies residues 368–388 (LFTVLDGLAFLISPPLAGLLL). The Extracellular segment spans residues 389 to 396 (DATNNFSY). Residues 397 to 417 (VFYMSSFFLISAALFMGGSFY) form a helical membrane-spanning segment. Residues 418 to 505 (ALQKKEQGKQ…QTALGWNSPT (88 aa)) are Cytoplasmic-facing. The interval 443 to 464 (KDGPGKQRSPEIMCQSSRQPRP) is disordered.

Belongs to the major facilitator superfamily. Monocarboxylate porter (TC 2.A.1.13) family. In terms of tissue distribution, highly expressed in kidney.

The protein localises to the cell membrane. Proton-linked monocarboxylate transporter. Catalyzes the rapid transport across the plasma membrane of many monocarboxylates such as lactate, pyruvate, branched-chain oxo acids derived from leucine, valine and isoleucine, and the ketone bodies acetoacetate, beta-hydroxybutyrate and acetate. The protein is Monocarboxylate transporter 6 (SLC16A5) of Homo sapiens (Human).